Reading from the N-terminus, the 519-residue chain is Xylose import ATP-binding protein XylG (519 aa).

2 consecutive ABC transporter domains span residues 6 to 245 (LTMR…VGRE) and 262 to 507 (LDVR…LKPA). 38–45 (GENGAGKS) provides a ligand contact to ATP.

The protein belongs to the ABC transporter superfamily. Xylose importer (TC 3.A.1.2.4) family. The complex is composed of two ATP-binding proteins (XylG), two transmembrane proteins (XylH) and a solute-binding protein (XylF).

It localises to the cell inner membrane. It catalyses the reaction D-xylose(out) + ATP + H2O = D-xylose(in) + ADP + phosphate + H(+). Its function is as follows. Part of the ABC transporter complex XylFGH involved in xylose import. Responsible for energy coupling to the transport system. This Burkholderia cenocepacia (strain HI2424) protein is Xylose import ATP-binding protein XylG.